The following is a 229-amino-acid chain: MSQGDSNPAAIPHAAEDIQGDDRWMSQHNRFVLDCKDKEPDVLFVGDSMVQLMQQYEIWRELFSPLHALNFGIGGDTTRHVLWRLKNGELENIKPKVIVVWVGTNNHENTAEEVAGGIEAIVQLINTRQPQAKIIVLGLLPRGEKPNPLRQKNAKVNQLLKVSLPKLANVQLLDTDGGFVHSDGAISCHDMFDFLHLTGGGYAKICKPLHELIMQLLEETPEEKQTTIA.

Serine 2 carries the N-acetylserine modification. Serine 2 carries the post-translational modification Phosphoserine. Residue serine 48 is part of the active site. Residue serine 64 is modified to Phosphoserine. Active-site residues include aspartate 193 and histidine 196. At threonine 220 the chain carries Phosphothreonine.

This sequence belongs to the 'GDSL' lipolytic enzyme family. Platelet-activating factor acetylhydrolase IB beta/gamma subunits subfamily. As to quaternary structure, forms a catalytic dimer which is either homodimer (alpha2/alpha2 homodimer) or heterodimer with PAFAH1B3 (alpha2/alpha1 heterodimer). Component of the cytosolic (PAF-AH (I)) heterotetrameric enzyme, which is composed of PAFAH1B1 (beta), PAFAH1B2 (alpha2) and PAFAH1B3 (alpha1) subunits. The catalytic activity of the enzyme resides in the alpha1 (PAFAH1B3) and alpha2 (PAFAH1B2) subunits, whereas the beta subunit (PAFAH1B1) has regulatory activity. Trimer formation is not essential for the catalytic activity. Interacts (homodimer form) with PAFAH1B1 (homodimer form); PAFAH1B2 competes with NDEL1 for PAFAH1B1 binding. Interacts with VLDLR; this interaction may modulate the Reelin pathway.

The protein resides in the cytoplasm. The catalysed reaction is a 1-O-alkyl-2-acetyl-sn-glycero-3-phosphocholine + H2O = a 1-O-alkyl-sn-glycero-3-phosphocholine + acetate + H(+). It catalyses the reaction 1-O-hexadecyl-2-acetyl-sn-glycero-3-phosphocholine + H2O = 1-O-hexadecyl-sn-glycero-3-phosphocholine + acetate + H(+). The enzyme catalyses 1-O-hexadecyl-2-acetyl-sn-glycero-3-phosphate + H2O = 1-O-hexadecyl-sn-glycero-3-phosphate + acetate + H(+). It carries out the reaction 1-O-hexadecyl-2-acetyl-sn-glycero-3-phosphoethanolamine + H2O = 1-O-hexadecyl-sn-glycero-3-phosphoethanolamine + acetate + H(+). With respect to regulation, beta subunit (PAFAH1B1) stimulates the acetylhydrolase activity of the alpha2/alpha2 catalytic homodimer. In terms of biological role, alpha2 catalytic subunit of the cytosolic type I platelet-activating factor (PAF) acetylhydrolase (PAF-AH (I)) heterotetrameric enzyme that catalyzes the hydrolyze of the acetyl group at the sn-2 position of PAF and its analogs and modulates the action of PAF. The activity and substrate specificity of PAF-AH (I) are affected by its subunit composition. The alpha2/alpha2 homodimer (PAFAH1B2/PAFAH1B2 homodimer) hydrolyzes PAF and 1-O-alkyl-2-acetyl-sn-glycero-3-phosphorylethanolamine (AAGPE) more efficiently than 1-O-alkyl-2-acetyl-sn-glycero-3-phosphoric acid (AAGPA). In contrast, the alpha1/alpha2 heterodimer(PAFAH1B3/PAFAH1B3 heterodimer) hydrolyzes AAGPA more efficiently than PAF, but has little hydrolytic activity towards AAGPE. May play a role in male germ cell meiosis during the late pachytenestage and meiotic divisions as well as early spermiogenesis. In Pongo abelii (Sumatran orangutan), this protein is Platelet-activating factor acetylhydrolase IB subunit alpha2.